A 549-amino-acid polypeptide reads, in one-letter code: CDK5RAP3 protein homolog (549 aa).

Short sequence motifs (shuffled ATG8-binding motif) lie at residues I274–D277, I285–D288, and I333–D336.

It belongs to the CDK5RAP3 family. Substrate adapter component of the UFM1 ribosome E3 ligase (UREL) complex. Interacts with ATG8 family proteins.

Its function is as follows. Substrate adapter of E3 ligase complexes mediating ufmylation, the covalent attachment of the ubiquitin-like modifier UFM1 to substrate proteins, and which is involved in various processes, such as ribosome recycling and reticulophagy (also called ER-phagy). The chain is CDK5RAP3 protein homolog from Arabidopsis thaliana (Mouse-ear cress).